The sequence spans 513 residues: MSAVTLTPGRAALAQWRAIRDGAPLRLDPACRPGIARAAETVAAIVARGEPVYGINTGFGKLATVRIAPDDLATLQRNIVLSHAAGVGAPVPAGIVRLMMALKLASLAQGASGVRPETVALLDAMLARGVTPVVPGQGSVGASGDLAPLAHMTAAMIGVGECLDAGGARLPAAAALARADLAPLDLGPKEGLALLNGTQFSTALALAGLFGAEDLLRAGLVTGALSVDAARGSDTPFDPRIHALRRHRGQIDAADALRRLLAGSAIRASHLVGDERVQDPYCLRCQPQVMGAALDLLRQAGATLETEANGVSDNPLVFPETGEALSGGNFHAEPVAFAADMIALALCEIGSLAERRISLLVDPALSSGLPAFLTGRPGLNSGFMIPQVTAAALVSENKQRAYPASVDSIPTSANQEDHVSMAAHGARRLLAMAENAAAVLGIELLAAAQGCDFLAPLRSSEALERVRARLRAAVPRLDEDRYLHPELEAATALVRDGAVVAAAGLDLPGVDGR.

Positions 142–144 form a cross-link, 5-imidazolinone (Ala-Gly); sequence ASG. Serine 143 bears the 2,3-didehydroalanine (Ser) mark.

This sequence belongs to the PAL/histidase family. In terms of processing, contains an active site 4-methylidene-imidazol-5-one (MIO), which is formed autocatalytically by cyclization and dehydration of residues Ala-Ser-Gly.

The protein resides in the cytoplasm. The catalysed reaction is L-histidine = trans-urocanate + NH4(+). It functions in the pathway amino-acid degradation; L-histidine degradation into L-glutamate; N-formimidoyl-L-glutamate from L-histidine: step 1/3. This chain is Histidine ammonia-lyase, found in Methylobacterium sp. (strain 4-46).